The sequence spans 273 residues: 2-dehydro-3-deoxyphosphooctonate aldolase (273 aa).

Belongs to the KdsA family.

It is found in the cytoplasm. The catalysed reaction is D-arabinose 5-phosphate + phosphoenolpyruvate + H2O = 3-deoxy-alpha-D-manno-2-octulosonate-8-phosphate + phosphate. The protein operates within carbohydrate biosynthesis; 3-deoxy-D-manno-octulosonate biosynthesis; 3-deoxy-D-manno-octulosonate from D-ribulose 5-phosphate: step 2/3. It functions in the pathway bacterial outer membrane biogenesis; lipopolysaccharide biosynthesis. This Citrifermentans bemidjiense (strain ATCC BAA-1014 / DSM 16622 / JCM 12645 / Bem) (Geobacter bemidjiensis) protein is 2-dehydro-3-deoxyphosphooctonate aldolase.